A 394-amino-acid chain; its full sequence is Phosphopentomutase (394 aa).

Mn(2+)-binding residues include Asp15, Asp288, His293, Asp329, His330, and His341.

Belongs to the phosphopentomutase family. The cofactor is Mn(2+).

Its subcellular location is the cytoplasm. The enzyme catalyses 2-deoxy-alpha-D-ribose 1-phosphate = 2-deoxy-D-ribose 5-phosphate. It catalyses the reaction alpha-D-ribose 1-phosphate = D-ribose 5-phosphate. The protein operates within carbohydrate degradation; 2-deoxy-D-ribose 1-phosphate degradation; D-glyceraldehyde 3-phosphate and acetaldehyde from 2-deoxy-alpha-D-ribose 1-phosphate: step 1/2. Isomerase that catalyzes the conversion of deoxy-ribose 1-phosphate (dRib-1-P) and ribose 1-phosphate (Rib-1-P) to deoxy-ribose 5-phosphate (dRib-5-P) and ribose 5-phosphate (Rib-5-P), respectively. The polypeptide is Phosphopentomutase (Bacillus licheniformis (strain ATCC 14580 / DSM 13 / JCM 2505 / CCUG 7422 / NBRC 12200 / NCIMB 9375 / NCTC 10341 / NRRL NRS-1264 / Gibson 46)).